Here is a 40-residue protein sequence, read N- to C-terminus: MITDVQLAIFSNVLGVFLFLLVVAYHYINANTGKSSPKAK.

At 1 to 4 the chain is on the lumenal side; it reads MITD. A helical membrane pass occupies residues 5-25; that stretch reads VQLAIFSNVLGVFLFLLVVAY. The Cytoplasmic portion of the chain corresponds to 26–40; it reads HYINANTGKSSPKAK.

It belongs to the OST4 family. As to quaternary structure, component of the oligosaccharyltransferase (OST) complex.

The protein resides in the endoplasmic reticulum membrane. Subunit of the oligosaccharyl transferase (OST) complex that catalyzes the initial transfer of a defined glycan (Glc(3)Man(9)GlcNAc(2) in eukaryotes) from the lipid carrier dolichol-pyrophosphate to an asparagine residue within an Asn-X-Ser/Thr consensus motif in nascent polypeptide chains, the first step in protein N-glycosylation. N-glycosylation occurs cotranslationally and the complex associates with the Sec61 complex at the channel-forming translocon complex that mediates protein translocation across the endoplasmic reticulum (ER). All subunits are required for a maximal enzyme activity. The polypeptide is Dolichyl-diphosphooligosaccharide--protein glycosyltransferase subunit 4 (Drosophila persimilis (Fruit fly)).